A 326-amino-acid chain; its full sequence is tRNA-modifying protein YgfZ (326 aa).

Tryptophan 27 and tryptophan 189 together coordinate folate.

The protein belongs to the tRNA-modifying YgfZ family.

It is found in the cytoplasm. In terms of biological role, folate-binding protein involved in regulating the level of ATP-DnaA and in the modification of some tRNAs. It is probably a key factor in regulatory networks that act via tRNA modification, such as initiation of chromosomal replication. The polypeptide is tRNA-modifying protein YgfZ (Enterobacter sp. (strain 638)).